Reading from the N-terminus, the 589-residue chain is Cytoplasmic polyadenylation element-binding protein 2 (589 aa).

Disordered regions lie at residues 1–103 and 118–140; these read MPPP…QAAA and PLLK…SMSW. A compositionally biased stretch (low complexity) spans 24–33; it reads FFPSFSPVSP. Positions 44 to 53 are enriched in gly residues; it reads SGGGGGGFGG. Residues 60-81 are compositionally biased toward pro residues; that stretch reads VPPPPPPAMNIPQQQPPPPAAP. Composition is skewed to low complexity over residues 82-103 and 130-140; these read QQPQ…QAAA and SSGWGTGSMSW. Phosphoserine is present on serine 89. 2 RRM domains span residues 332-423 and 440-522; these read RKVF…PWNL and KTIF…PYVL.

The protein belongs to the RRM CPEB family. As to quaternary structure, interacts with TENT2/GLD2.

The protein resides in the cytoplasm. In terms of biological role, may play a role in translational regulation of stored mRNAs in transcriptionally inactive haploid spermatids. Binds to poly(U) RNA oligomers. Required for cell cycle progression, specifically for the transition from metaphase to anaphase. The sequence is that of Cytoplasmic polyadenylation element-binding protein 2 (CPEB2) from Homo sapiens (Human).